The sequence spans 182 residues: MLIVNRNPKSLVRGYCKKDIVLRNLDGWLFDMITISTIFKLYNQICSLSSTDRKKTSISNKLQQEFCIMDINKVGRNFISLGKIRSSKRRNAILSYQTIISSFPHNHVQKLFQRTQSTNMIYTKLEYFGHSLFFYFTAFTLSFKDRKILMQADVFFRLKLVFKIAFFFTQTTFLNKKENREL.

It is found in the mitochondrion. This is an uncharacterized protein from Schizosaccharomyces pombe (strain 972 / ATCC 24843) (Fission yeast).